A 309-amino-acid chain; its full sequence is HPr kinase/phosphorylase (309 aa).

Active-site residues include His-144 and Lys-165. Gly-159–Ser-166 lines the ATP pocket. Ser-166 provides a ligand contact to Mg(2+). Asp-183 (proton acceptor; for phosphorylation activity. Proton donor; for dephosphorylation activity) is an active-site residue. Residues Ile-206 to Asp-215 form an important for the catalytic mechanism of both phosphorylation and dephosphorylation region. A Mg(2+)-binding site is contributed by Glu-207. Arg-249 is an active-site residue. The tract at residues Pro-270–Arg-275 is important for the catalytic mechanism of dephosphorylation.

This sequence belongs to the HPrK/P family. In terms of assembly, homohexamer. It depends on Mg(2+) as a cofactor.

The enzyme catalyses [HPr protein]-L-serine + ATP = [HPr protein]-O-phospho-L-serine + ADP + H(+). The catalysed reaction is [HPr protein]-O-phospho-L-serine + phosphate + H(+) = [HPr protein]-L-serine + diphosphate. Functionally, catalyzes the ATP- as well as the pyrophosphate-dependent phosphorylation of a specific serine residue in HPr, a phosphocarrier protein of the phosphoenolpyruvate-dependent sugar phosphotransferase system (PTS). HprK/P also catalyzes the pyrophosphate-producing, inorganic phosphate-dependent dephosphorylation (phosphorolysis) of seryl-phosphorylated HPr (P-Ser-HPr). This Mycoplasmopsis pulmonis (strain UAB CTIP) (Mycoplasma pulmonis) protein is HPr kinase/phosphorylase (hprK).